Here is a 338-residue protein sequence, read N- to C-terminus: Ketol-acid reductoisomerase (NADP(+)) (338 aa).

Positions 1 to 181 (MKVFYDKDAD…GGGRAGIIET (181 aa)) constitute a KARI N-terminal Rossmann domain. Residues 24–27 (YGSQ), Arg47, and Ser52 each bind NADP(+). His107 is a catalytic residue. Residue Gly133 coordinates NADP(+). The region spanning 182–327 (NFREETETDL…GKLRAMMPWI (146 aa)) is the KARI C-terminal knotted domain. Mg(2+) is bound by residues Asp190, Glu194, Glu226, and Glu230. Substrate is bound at residue Ser251.

Belongs to the ketol-acid reductoisomerase family. It depends on Mg(2+) as a cofactor.

The enzyme catalyses (2R)-2,3-dihydroxy-3-methylbutanoate + NADP(+) = (2S)-2-acetolactate + NADPH + H(+). It carries out the reaction (2R,3R)-2,3-dihydroxy-3-methylpentanoate + NADP(+) = (S)-2-ethyl-2-hydroxy-3-oxobutanoate + NADPH + H(+). It functions in the pathway amino-acid biosynthesis; L-isoleucine biosynthesis; L-isoleucine from 2-oxobutanoate: step 2/4. It participates in amino-acid biosynthesis; L-valine biosynthesis; L-valine from pyruvate: step 2/4. Functionally, involved in the biosynthesis of branched-chain amino acids (BCAA). Catalyzes an alkyl-migration followed by a ketol-acid reduction of (S)-2-acetolactate (S2AL) to yield (R)-2,3-dihydroxy-isovalerate. In the isomerase reaction, S2AL is rearranged via a Mg-dependent methyl migration to produce 3-hydroxy-3-methyl-2-ketobutyrate (HMKB). In the reductase reaction, this 2-ketoacid undergoes a metal-dependent reduction by NADPH to yield (R)-2,3-dihydroxy-isovalerate. The polypeptide is Ketol-acid reductoisomerase (NADP(+)) (Cupriavidus metallidurans (strain ATCC 43123 / DSM 2839 / NBRC 102507 / CH34) (Ralstonia metallidurans)).